A 479-amino-acid polypeptide reads, in one-letter code: UDP-N-acetylmuramoyl-L-alanyl-D-glutamate--2,6-diaminopimelate ligase (479 aa).

Ser-21 is a binding site for UDP-N-acetyl-alpha-D-muramoyl-L-alanyl-D-glutamate. Residue 98-104 (GTNGKSS) participates in ATP binding. UDP-N-acetyl-alpha-D-muramoyl-L-alanyl-D-glutamate-binding positions include 144–145 (TT), Ser-171, Gln-177, and Arg-179. An N6-carboxylysine modification is found at Lys-211. Meso-2,6-diaminopimelate-binding positions include Arg-372, 396-399 (DNPR), Gly-446, and Glu-450. Residues 396 to 399 (DNPR) carry the Meso-diaminopimelate recognition motif motif.

The protein belongs to the MurCDEF family. MurE subfamily. Mg(2+) serves as cofactor. Post-translationally, carboxylation is probably crucial for Mg(2+) binding and, consequently, for the gamma-phosphate positioning of ATP.

The protein localises to the cytoplasm. It catalyses the reaction UDP-N-acetyl-alpha-D-muramoyl-L-alanyl-D-glutamate + meso-2,6-diaminopimelate + ATP = UDP-N-acetyl-alpha-D-muramoyl-L-alanyl-gamma-D-glutamyl-meso-2,6-diaminopimelate + ADP + phosphate + H(+). It participates in cell wall biogenesis; peptidoglycan biosynthesis. In terms of biological role, catalyzes the addition of meso-diaminopimelic acid to the nucleotide precursor UDP-N-acetylmuramoyl-L-alanyl-D-glutamate (UMAG) in the biosynthesis of bacterial cell-wall peptidoglycan. The sequence is that of UDP-N-acetylmuramoyl-L-alanyl-D-glutamate--2,6-diaminopimelate ligase from Rickettsia montanensis.